The sequence spans 349 residues: Small ribosomal subunit protein uS2 (349 aa).

Residues 302–334 (QNNYDPSKRGYNPKYVNHKSTFNKFNNKKPVDS) form a disordered region.

It belongs to the universal ribosomal protein uS2 family.

This chain is Small ribosomal subunit protein uS2, found in Ureaplasma parvum serovar 3 (strain ATCC 27815 / 27 / NCTC 11736).